Here is a 189-residue protein sequence, read N- to C-terminus: Interferon alpha-16 (189 aa).

Positions 1–23 (MALSFSLLMAVLVLSYKSICSLG) are cleaved as a signal peptide. 2 disulfides stabilise this stretch: Cys-24-Cys-122 and Cys-52-Cys-162.

The protein belongs to the alpha/beta interferon family.

Its subcellular location is the secreted. In terms of biological role, produced by macrophages, IFN-alpha have antiviral activities. Interferon stimulates the production of two enzymes: a protein kinase and an oligoadenylate synthetase. The chain is Interferon alpha-16 (IFNA16) from Homo sapiens (Human).